Reading from the N-terminus, the 312-residue chain is Protein-methionine-sulfoxide reductase catalytic subunit MsrP (312 aa).

A signal peptide (tat-type signal) is located at residues 1 to 45 (MPVYRPPRIAASEITPERFFLDRRSFLAAAGGLVLGGTGMAHAAA). Residues asparagine 69, 72 to 73 (YE), cysteine 126, threonine 161, asparagine 211, arginine 216, and 227 to 229 (GIK) each bind Mo-molybdopterin.

Belongs to the MsrP family. Heterodimer of a catalytic subunit (MsrP) and a heme-binding subunit (MsrQ). Requires Mo-molybdopterin as cofactor. Post-translationally, predicted to be exported by the Tat system. The position of the signal peptide cleavage has not been experimentally proven.

Its subcellular location is the periplasm. The catalysed reaction is L-methionyl-[protein] + a quinone + H2O = L-methionyl-(S)-S-oxide-[protein] + a quinol. It catalyses the reaction L-methionyl-[protein] + a quinone + H2O = L-methionyl-(R)-S-oxide-[protein] + a quinol. Functionally, part of the MsrPQ system that repairs oxidized periplasmic proteins containing methionine sulfoxide residues (Met-O), using respiratory chain electrons. Thus protects these proteins from oxidative-stress damage caused by reactive species of oxygen and chlorine generated by the host defense mechanisms. MsrPQ is essential for the maintenance of envelope integrity under bleach stress, rescuing a wide series of structurally unrelated periplasmic proteins from methionine oxidation. The catalytic subunit MsrP is non-stereospecific, being able to reduce both (R-) and (S-) diastereoisomers of methionine sulfoxide. In Sinorhizobium fredii (strain NBRC 101917 / NGR234), this protein is Protein-methionine-sulfoxide reductase catalytic subunit MsrP.